Consider the following 388-residue polypeptide: FBD-associated F-box protein At5g60610 (388 aa).

The F-box domain occupies 1 to 47 (MDRISGLPDELLVKIISFVPTKVAVSTSILSKRWESLWKWVPKLECD). The FBD domain occupies 337 to 388 (NWKNIQRSVPKCLKSSLKTLEFAGYTARPEERDFLSFIFKKARCLKTSSISH).

In Arabidopsis thaliana (Mouse-ear cress), this protein is FBD-associated F-box protein At5g60610.